A 393-amino-acid polypeptide reads, in one-letter code: G protein-activated inward rectifier potassium channel 3 (393 aa).

The tract at residues methionine 1–arginine 23 is disordered. Residues methionine 1–tryptophan 57 are Cytoplasmic-facing. A helical membrane pass occupies residues arginine 58–isoleucine 82. Over alanine 83–glycine 106 the chain is Extracellular. The segment at residues phenylalanine 107 to glutamate 118 is an intramembrane region (helical; Pore-forming). Residues threonine 119–histidine 125 constitute an intramembrane region (pore-forming). The short motif at threonine 120–histidine 125 is the Selectivity filter element. The Extracellular portion of the chain corresponds to arginine 126 to glutamate 134. A helical membrane pass occupies residues glycine 135–cysteine 156. The Cytoplasmic segment spans residues methionine 157 to valine 393. The disordered stretch occupies residues lysine 360–valine 393. A compositionally biased stretch (pro residues) spans leucine 384–valine 393. The PDZ-binding signature appears at glutamate 390–valine 393.

Belongs to the inward rectifier-type potassium channel (TC 1.A.2.1) family. KCNJ9 subfamily. In terms of assembly, associates with KCNJ3/GIRK1 to form a G-protein-activated heteromultimer pore-forming unit. Interacts (via PDZ-binding motif) with SNX27 (via PDZ domain); the interaction is required when endocytosed to prevent degradation in lysosomes and promote recycling to the plasma membrane.

It localises to the membrane. It carries out the reaction K(+)(in) = K(+)(out). Its function is as follows. This receptor is controlled by G proteins. Inward rectifier potassium channels are characterized by a greater tendency to allow potassium to flow into the cell rather than out of it. Their voltage dependence is regulated by the concentration of extracellular potassium; as external potassium is raised, the voltage range of the channel opening shifts to more positive voltages. The inward rectification is mainly due to the blockage of outward current by internal magnesium. Unable to produce channel activity when expressed alone but forms a functional channel in association with KCNJ3/GIRK1. The chain is G protein-activated inward rectifier potassium channel 3 (Kcnj9) from Rattus norvegicus (Rat).